Reading from the N-terminus, the 216-residue chain is Ribosome maturation factor RimP (216 aa).

The protein belongs to the RimP family.

Its subcellular location is the cytoplasm. In terms of biological role, required for maturation of 30S ribosomal subunits. The protein is Ribosome maturation factor RimP of Bartonella quintana (strain Toulouse) (Rochalimaea quintana).